The following is a 201-amino-acid chain: Sorting nexin-10 (201 aa).

Positions 8–125 are required for interaction with ATP6V1D; it reads EEFVSVWVRD…SLHLFLQSHL (118 aa). A PX domain is found at 10–127; the sequence is FVSVWVRDPR…HLFLQSHLNS (118 aa). R53, K79, and R94 together coordinate a 1,2-diacyl-sn-glycero-3-phospho-(1D-myo-inositol-3-phosphate). Residues 156-201 form a disordered region; that stretch reads FPEEDEEGKKENDIDYDSESSSSGLGHSSDDSSSHGCKVNTAPQES.

It belongs to the sorting nexin family. Interacts with ATP6V1D; may play a role in ciliogenesis.

It localises to the cytoplasm. It is found in the endosome membrane. The protein resides in the cytoskeleton. Its subcellular location is the microtubule organizing center. The protein localises to the centrosome. Functionally, probable phosphoinositide-binding protein involved in protein sorting and membrane trafficking in endosomes. Plays a role in cilium biogenesis through regulation of the transport and the localization of proteins to the cilium. Required for the localization to the cilium of V-ATPase subunit ATP6V1D and ATP6V0D1, and RAB8A. Involved in osteoclast differentiation and therefore bone resorption. In Homo sapiens (Human), this protein is Sorting nexin-10 (SNX10).